An 88-amino-acid polypeptide reads, in one-letter code: Acylphosphatase (88 aa).

Positions 3–88 constitute an Acylphosphatase-like domain; sequence AARFIFTGVV…IPTTEAFVTG (86 aa). Active-site residues include arginine 18 and asparagine 36.

Belongs to the acylphosphatase family.

It carries out the reaction an acyl phosphate + H2O = a carboxylate + phosphate + H(+). In Xanthomonas campestris pv. campestris (strain 8004), this protein is Acylphosphatase (acyP).